The sequence spans 451 residues: Tubulin alpha-2 chain (451 aa).

Gln11 serves as a coordination point for GTP. An N6-acetyllysine modification is found at Lys40. Residues Glu71, Gly144, Thr145, Thr179, Asn206, and Asn228 each contribute to the GTP site. A Mg(2+)-binding site is contributed by Glu71. The active site involves Glu254.

The protein belongs to the tubulin family. In terms of assembly, dimer of alpha and beta chains. A typical microtubule is a hollow water-filled tube with an outer diameter of 25 nm and an inner diameter of 15 nM. Alpha-beta heterodimers associate head-to-tail to form protofilaments running lengthwise along the microtubule wall with the beta-tubulin subunit facing the microtubule plus end conferring a structural polarity. Microtubules usually have 13 protofilaments but different protofilament numbers can be found in some organisms and specialized cells. Mg(2+) is required as a cofactor. Post-translationally, undergoes a tyrosination/detyrosination cycle, the cyclic removal and re-addition of a C-terminal tyrosine residue by the enzymes tubulin tyrosine carboxypeptidase (TTCP) and tubulin tyrosine ligase (TTL), respectively. In terms of processing, acetylation of alpha chains at Lys-40 stabilizes microtubules and affects affinity and processivity of microtubule motors. This modification has a role in multiple cellular functions, ranging from cell motility, cell cycle progression or cell differentiation to intracellular trafficking and signaling.

Its subcellular location is the cytoplasm. The protein resides in the cytoskeleton. The enzyme catalyses GTP + H2O = GDP + phosphate + H(+). Its function is as follows. Tubulin is the major constituent of microtubules, a cylinder consisting of laterally associated linear protofilaments composed of alpha- and beta-tubulin heterodimers. Microtubules grow by the addition of GTP-tubulin dimers to the microtubule end, where a stabilizing cap forms. Below the cap, tubulin dimers are in GDP-bound state, owing to GTPase activity of alpha-tubulin. The polypeptide is Tubulin alpha-2 chain (TUBA) (Oryza sativa subsp. japonica (Rice)).